A 341-amino-acid chain; its full sequence is MTELFYDDDADLSIIQGRTVAVIGYGSQGHAHALSLRDSGVDVRVGLAEGSQSRAKAEAEGLRVLNVAEAVAEADVIMVLTPDQVQRHVYAESIAANLQAGDALFFGHGFNIRYGYIQPPADVDVALVAPKGPGHIVRREFEAGRGVPDLIAVEQDPSGNAWALALSYAKAIGGTRAGVIKTTFTEETETDLFGEQAVLCGGASQLIQYGFETLTEAGYKPEVAYFEVLHELKLIVDLMVEGGIAKQRWSVSDTAEYGDYVSGPLVIDAHVKDNMKAVLKDIQDGTFAKRFIDDQDAGAPEFKALRAKGEQHPIETTGRELRKLFSWIQNDDDYTEGSVAR.

The 182-residue stretch at 1–182 (MTELFYDDDA…GGTRAGVIKT (182 aa)) folds into the KARI N-terminal Rossmann domain. Residues 25–28 (YGSQ), Ser-51, Ser-53, and 83–86 (DQVQ) contribute to the NADP(+) site. The active site involves His-108. NADP(+) is bound at residue Gly-134. The 146-residue stretch at 183–328 (TFTEETETDL…RELRKLFSWI (146 aa)) folds into the KARI C-terminal knotted domain. 4 residues coordinate Mg(2+): Asp-191, Glu-195, Glu-227, and Glu-231. Ser-252 lines the substrate pocket.

The protein belongs to the ketol-acid reductoisomerase family. Requires Mg(2+) as cofactor.

The catalysed reaction is (2R)-2,3-dihydroxy-3-methylbutanoate + NADP(+) = (2S)-2-acetolactate + NADPH + H(+). The enzyme catalyses (2R,3R)-2,3-dihydroxy-3-methylpentanoate + NADP(+) = (S)-2-ethyl-2-hydroxy-3-oxobutanoate + NADPH + H(+). The protein operates within amino-acid biosynthesis; L-isoleucine biosynthesis; L-isoleucine from 2-oxobutanoate: step 2/4. Its pathway is amino-acid biosynthesis; L-valine biosynthesis; L-valine from pyruvate: step 2/4. In terms of biological role, involved in the biosynthesis of branched-chain amino acids (BCAA). Catalyzes an alkyl-migration followed by a ketol-acid reduction of (S)-2-acetolactate (S2AL) to yield (R)-2,3-dihydroxy-isovalerate. In the isomerase reaction, S2AL is rearranged via a Mg-dependent methyl migration to produce 3-hydroxy-3-methyl-2-ketobutyrate (HMKB). In the reductase reaction, this 2-ketoacid undergoes a metal-dependent reduction by NADPH to yield (R)-2,3-dihydroxy-isovalerate. This is Ketol-acid reductoisomerase (NADP(+)) from Renibacterium salmoninarum (strain ATCC 33209 / DSM 20767 / JCM 11484 / NBRC 15589 / NCIMB 2235).